A 135-amino-acid polypeptide reads, in one-letter code: ATP synthase epsilon chain (135 aa).

The protein belongs to the ATPase epsilon chain family. In terms of assembly, F-type ATPases have 2 components, CF(1) - the catalytic core - and CF(0) - the membrane proton channel. CF(1) has five subunits: alpha(3), beta(3), gamma(1), delta(1), epsilon(1). CF(0) has three main subunits: a, b and c.

The protein resides in the cell inner membrane. Functionally, produces ATP from ADP in the presence of a proton gradient across the membrane. This chain is ATP synthase epsilon chain, found in Rhodopseudomonas palustris (strain BisB18).